A 264-amino-acid polypeptide reads, in one-letter code: 3-deoxy-manno-octulosonate cytidylyltransferase (264 aa).

It belongs to the KdsB family.

Its subcellular location is the cytoplasm. The enzyme catalyses 3-deoxy-alpha-D-manno-oct-2-ulosonate + CTP = CMP-3-deoxy-beta-D-manno-octulosonate + diphosphate. The protein operates within nucleotide-sugar biosynthesis; CMP-3-deoxy-D-manno-octulosonate biosynthesis; CMP-3-deoxy-D-manno-octulosonate from 3-deoxy-D-manno-octulosonate and CTP: step 1/1. It functions in the pathway bacterial outer membrane biogenesis; lipopolysaccharide biosynthesis. Its function is as follows. Activates KDO (a required 8-carbon sugar) for incorporation into bacterial lipopolysaccharide in Gram-negative bacteria. The polypeptide is 3-deoxy-manno-octulosonate cytidylyltransferase (Marinomonas sp. (strain MWYL1)).